The following is a 1101-amino-acid chain: Structural maintenance of chromosomes protein 5 (1101 aa).

A disordered region spans residues 1 to 44; the sequence is MATPSGKAAPPNPQVSKRSLPRDASSEVPSKRKNSNPLPTLPRP. Ser-25 and Ser-35 each carry phosphoserine. An ATP-binding site is contributed by 80–87; sequence GANGTGKS. Positions 207–440 form a coiled coil; sequence EMHRYHCELK…LEKQRRSVSD (234 aa). A flexible hinge region spans residues 441–644; sequence HITRFDNLMN…TSLKVAQFLT (204 aa). 3 coiled-coil regions span residues 645-753, 780-828, and 888-927; these read VTVD…VTEL, EKNK…QVCN, and SVVE…VKER.

The protein belongs to the SMC family. SMC5 subfamily. As to quaternary structure, forms a heterodimer with SMC6. Component of the SMC5-SMC6 complex which consists at least of SMC5, SMC6, NSMCE2, NSMCE1, NSMCE4A or EID3 and NSMCE3. Interacts with NSMCE2. Interacts with SLF2; this interaction induces an association of the SLF1-SLF2 complex with the SMC5-SMC6 complex. Interacts with RAD18; this interaction is increased in a SLF1 or SLF2-dependent manner. In terms of processing, sumoylated. Post-translationally, ubiquitinated. As to expression, expressed in testis but not ovary.

Its subcellular location is the nucleus. It localises to the chromosome. The protein resides in the PML body. It is found in the telomere. Functionally, core component of the SMC5-SMC6 complex, a complex involved in repair of DNA double-strand breaks by homologous recombination. The complex may promote sister chromatid homologous recombination by recruiting the SMC1-SMC3 cohesin complex to double-strand breaks. The complex is required for telomere maintenance via recombination and mediates sumoylation of shelterin complex (telosome) components. Required for sister chromatid cohesion during prometaphase and mitotic progression; the function seems to be independent of SMC6. The chain is Structural maintenance of chromosomes protein 5 (Smc5) from Mus musculus (Mouse).